Reading from the N-terminus, the 393-residue chain is Protein TsgA (393 aa).

12 helical membrane-spanning segments follow: residues 11–31, 51–71, 78–98, 101–121, 134–154, 162–182, 206–226, 245–265, 273–293, 298–318, 332–352, and 361–381; these read WISF…GMVM, FLNA…EIIP, FGFI…SLAL, AAMF…TFLI, LLFT…VAAF, WYWV…LTFG, IGVL…LGFI, ALVS…SFIL, ILTV…TGTQ, WFIL…ITLG, FILT…GPIV, and LLTA…LGFV.

Belongs to the major facilitator superfamily. TsgA family.

The protein localises to the cell inner membrane. This chain is Protein TsgA, found in Salmonella agona (strain SL483).